We begin with the raw amino-acid sequence, 126 residues long: Cyclin-dependent kinase 2-associated protein 2 (126 aa).

The interval 1-48 (MSYKPIAPAPSSTPGSSTPGPGTPVPTGSVPSPSGSVPGAGAPFRPLF) is disordered. The span at 9 to 43 (APSSTPGSSTPGPGTPVPTGSVPSPSGSVPGAGAP) shows a compositional bias: low complexity. An interaction with CDK2 region spans residues 64 to 106 (PPGAQGSQSTYTDLLSVIEEMGKEIRPTYAGSKSAMERLKRGI).

Belongs to the CDK2AP family. Component of the nucleosome remodeling and deacetylase (NuRD) repressor complex, composed of core proteins MTA1, MTA2, MTA3, RBBP4, RBBP7, HDAC1, HDAC2, MBD2, MBD3, and peripherally associated proteins CDK2AP1, CDK2AP2, GATAD2A, GATAD2B, CHD3, CHD4 and CHD5. The exact stoichiometry of the NuRD complex is unknown, and some subunits such as MBD2 and MBD3, GATAD2A and GATAD2B, and CHD3, CHD4 and CHD5 define mutually exclusive NuRD complexes. Interacts with CDK2AP1. Interacts with CDK2. Interacts with MAPK1. Post-translationally, phosphorylated by MAPK1 and CDK2. As to expression, ubiquitous.

The protein localises to the cytoplasm. Its subcellular location is the nucleus. Functionally, acts as a component of the histone deacetylase NuRD complex which participates in the remodeling of chromatin. Inhibits cell cycle G1/S phase transition by repressing CDK2 expression and activation; represses CDK2 activation by inhibiting its interaction with cyclin E and A. Plays a role in regulating the self-renewal of embryonic stem cells (ESCs) and in maintaining cell survival during terminal differentiation of ESCs. Regulates microtubule organization of metaphase II oocytes. The protein is Cyclin-dependent kinase 2-associated protein 2 (CDK2AP2) of Homo sapiens (Human).